The chain runs to 160 residues: Small ribosomal subunit protein bS6 (160 aa).

It belongs to the bacterial ribosomal protein bS6 family.

Its function is as follows. Binds together with bS18 to 16S ribosomal RNA. The protein is Small ribosomal subunit protein bS6 of Ureaplasma parvum serovar 3 (strain ATCC 27815 / 27 / NCTC 11736).